We begin with the raw amino-acid sequence, 261 residues long: Cell division protein B (261 aa).

The tract at residues 213-261 is winged-helix-like fold; sequence SEDMILNYIKTTGGFIDVDYIAKNFDVSKDEVFNVLRRLEEKGLIVLEG.

Interacts with CdvA. Interacts with CdvC.

The protein resides in the cytoplasm. Its subcellular location is the nucleoid. Its function is as follows. Part of a cell division machinery. The CdvA, CdvB and CdvC proteins polymerize between segregating nucleoids and persist throughout cell division, forming a successively smaller structure during constriction. The sequence is that of Cell division protein B from Sulfolobus acidocaldarius (strain ATCC 33909 / DSM 639 / JCM 8929 / NBRC 15157 / NCIMB 11770).